Here is a 410-residue protein sequence, read N- to C-terminus: Histone-lysine N-methyltransferase SUV39H2 (410 aa).

The Chromo domain occupies 47–105 (YEVEYLCDYKVVKDMEYYLVKWKGWPDSTNTWEPLQNLKCPLLLQQFFNDKHNYLSQVK). The 59-residue stretch at 189 to 247 (FGCSCTDCFFEKCCPAEAGVLLAYNKNQQIKIPPGTPIYECNSRCQCGPDCPNRIVQKG) folds into the Pre-SET domain. The Zn(2+) site is built by Cys191, Cys193, Cys196, Cys201, Cys202, Cys229, Cys233, Cys235, and Cys239. An SET domain is found at 250 to 373 (YSLCIFRTSN…AGEELTFDYQ (124 aa)). S-adenosyl-L-methionine contacts are provided by residues 261–263 (CGW), Tyr304, and 330–331 (NH). Cys333 is a Zn(2+) binding site. 3 positions are modified to phosphoserine: Ser381, Ser384, and Ser388. In terms of domain architecture, Post-SET spans 394 to 410 (ARTVCKCGAVTCRGYLN). Residues Cys398, Cys400, and Cys405 each contribute to the Zn(2+) site.

This sequence belongs to the class V-like SAM-binding methyltransferase superfamily. Histone-lysine methyltransferase family. Suvar3-9 subfamily. As to quaternary structure, interacts with SMAD5. The large PER complex involved in the histone methylation is composed of at least PER2, CBX3, TRIM28, SUV39H1 and/or SUV39H2; CBX3 mediates the formation of the complex. Post-translationally, ubiquitinated by the DCX(DCAF13) E3 ubiquitin ligase complex, leading to its degradation.

The protein resides in the nucleus. It localises to the chromosome. The protein localises to the centromere. It catalyses the reaction L-lysyl(9)-[histone H3] + 3 S-adenosyl-L-methionine = N(6),N(6),N(6)-trimethyl-L-lysyl(9)-[histone H3] + 3 S-adenosyl-L-homocysteine + 3 H(+). Functionally, histone methyltransferase that specifically trimethylates 'Lys-9' of histone H3 using monomethylated H3 'Lys-9' as substrate. H3 'Lys-9' trimethylation represents a specific tag for epigenetic transcriptional repression by recruiting HP1 (CBX1, CBX3 and/or CBX5) proteins to methylated histones. Mainly functions in heterochromatin regions, thereby playing a central role in the establishment of constitutive heterochromatin at pericentric and telomere regions. H3 'Lys-9' trimethylation is also required to direct DNA methylation at pericentric repeats. SUV39H1 is targeted to histone H3 via its interaction with RB1 and is involved in many processes, such as cell cycle regulation, transcriptional repression and regulation of telomere length. May participate in regulation of higher-order chromatin organization during spermatogenesis. Recruited by the large PER complex to the E-box elements of the circadian target genes such as PER2 itself or PER1, contributes to the conversion of local chromatin to a heterochromatin-like repressive state through H3 'Lys-9' trimethylation. This is Histone-lysine N-methyltransferase SUV39H2 (SUV39H2) from Bos taurus (Bovine).